Reading from the N-terminus, the 112-residue chain is Putative pterin-4-alpha-carbinolamine dehydratase (112 aa).

The protein belongs to the pterin-4-alpha-carbinolamine dehydratase family.

The catalysed reaction is (4aS,6R)-4a-hydroxy-L-erythro-5,6,7,8-tetrahydrobiopterin = (6R)-L-erythro-6,7-dihydrobiopterin + H2O. The polypeptide is Putative pterin-4-alpha-carbinolamine dehydratase (Shewanella woodyi (strain ATCC 51908 / MS32)).